The following is a 527-amino-acid chain: Peptide chain release factor 3 (527 aa).

The tr-type G domain maps to 9–277 (AKRRTFAIIS…CIVDWAPQPL (269 aa)). GTP-binding positions include 18–25 (SHPDAGKT), 86–90 (DTPGH), and 140–143 (NKLD).

This sequence belongs to the TRAFAC class translation factor GTPase superfamily. Classic translation factor GTPase family. PrfC subfamily.

The protein resides in the cytoplasm. Its function is as follows. Increases the formation of ribosomal termination complexes and stimulates activities of RF-1 and RF-2. It binds guanine nucleotides and has strong preference for UGA stop codons. It may interact directly with the ribosome. The stimulation of RF-1 and RF-2 is significantly reduced by GTP and GDP, but not by GMP. The sequence is that of Peptide chain release factor 3 from Pseudomonas aeruginosa (strain LESB58).